The following is a 328-amino-acid chain: Malate dehydrogenase (328 aa).

11–17 (GAAGQIG) is a binding site for NAD(+). Arg-94 and Arg-100 together coordinate substrate. NAD(+) is bound by residues Asn-107, Gln-114, and 131 to 133 (VGN). Residues Asn-133 and Arg-164 each contribute to the substrate site. Catalysis depends on His-189, which acts as the Proton acceptor.

It belongs to the LDH/MDH superfamily. MDH type 2 family.

The catalysed reaction is (S)-malate + NAD(+) = oxaloacetate + NADH + H(+). Catalyzes the reversible oxidation of malate to oxaloacetate. The chain is Malate dehydrogenase from Stenotrophomonas maltophilia (strain K279a).